The sequence spans 457 residues: Siroheme synthase (457 aa).

Residues 1–204 are precorrin-2 dehydrogenase /sirohydrochlorin ferrochelatase; sequence MDHLPIFCQL…ADEKAVNATT (204 aa). NAD(+)-binding positions include 22–23 and 43–44; these read DV and LT. Serine 128 is modified (phosphoserine). A uroporphyrinogen-III C-methyltransferase region spans residues 216–457; it reads GEVVLVGAGP…RDKLNWFSNY (242 aa). Residue proline 225 coordinates S-adenosyl-L-methionine. The Proton acceptor role is filled by aspartate 248. Residue lysine 270 is the Proton donor of the active site. S-adenosyl-L-methionine contacts are provided by residues 301–303, isoleucine 306, 331–332, methionine 382, and glycine 411; these read GGD and TA.

It in the N-terminal section; belongs to the precorrin-2 dehydrogenase / sirohydrochlorin ferrochelatase family. The protein in the C-terminal section; belongs to the precorrin methyltransferase family.

It carries out the reaction uroporphyrinogen III + 2 S-adenosyl-L-methionine = precorrin-2 + 2 S-adenosyl-L-homocysteine + H(+). It catalyses the reaction precorrin-2 + NAD(+) = sirohydrochlorin + NADH + 2 H(+). The enzyme catalyses siroheme + 2 H(+) = sirohydrochlorin + Fe(2+). It participates in cofactor biosynthesis; adenosylcobalamin biosynthesis; precorrin-2 from uroporphyrinogen III: step 1/1. Its pathway is cofactor biosynthesis; adenosylcobalamin biosynthesis; sirohydrochlorin from precorrin-2: step 1/1. The protein operates within porphyrin-containing compound metabolism; siroheme biosynthesis; precorrin-2 from uroporphyrinogen III: step 1/1. It functions in the pathway porphyrin-containing compound metabolism; siroheme biosynthesis; siroheme from sirohydrochlorin: step 1/1. It participates in porphyrin-containing compound metabolism; siroheme biosynthesis; sirohydrochlorin from precorrin-2: step 1/1. Functionally, multifunctional enzyme that catalyzes the SAM-dependent methylations of uroporphyrinogen III at position C-2 and C-7 to form precorrin-2 via precorrin-1. Then it catalyzes the NAD-dependent ring dehydrogenation of precorrin-2 to yield sirohydrochlorin. Finally, it catalyzes the ferrochelation of sirohydrochlorin to yield siroheme. The polypeptide is Siroheme synthase (Salmonella heidelberg (strain SL476)).